A 217-amino-acid chain; its full sequence is Variable small protein 22 (217 aa).

A signal peptide spans 1-18; that stretch reads MRKRISAIIMTLFMVFMS. The N-palmitoyl cysteine moiety is linked to residue Cys19. Residue Cys19 is the site of S-diacylglycerol cysteine attachment. Positions 151 to 174 are disordered; the sequence is LGKNDASDDDTKKAIKKDNSDKTK. Over residues 155-174 the composition is skewed to basic and acidic residues; it reads DASDDDTKKAIKKDNSDKTK.

This sequence belongs to the variable small protein (Vsp) family.

It is found in the cell outer membrane. The Vlp and Vsp proteins are antigenically distinct proteins, only one vlp or vsp gene is transcriptionally active at any one time. Switching between these genes is a mechanism of host immune response evasion. The sequence is that of Variable small protein 22 from Borrelia hermsii.